The chain runs to 273 residues: Proteasome subunit alpha (273 aa).

The disordered stretch occupies residues 231 to 273 (DDGAAGQPPSSSDTDTSAAEARKPTASAGSADLEGPEPERPDS). The segment covering 238 to 249 (PPSSSDTDTSAA) has biased composition (low complexity).

It belongs to the peptidase T1A family. As to quaternary structure, the 20S proteasome core is composed of 14 alpha and 14 beta subunits that assemble into four stacked heptameric rings, resulting in a barrel-shaped structure. The two inner rings, each composed of seven catalytic beta subunits, are sandwiched by two outer rings, each composed of seven alpha subunits. The catalytic chamber with the active sites is on the inside of the barrel. Has a gated structure, the ends of the cylinder being occluded by the N-termini of the alpha-subunits. Is capped by the proteasome-associated ATPase, ARC.

It localises to the cytoplasm. The protein operates within protein degradation; proteasomal Pup-dependent pathway. With respect to regulation, the formation of the proteasomal ATPase ARC-20S proteasome complex, likely via the docking of the C-termini of ARC into the intersubunit pockets in the alpha-rings, may trigger opening of the gate for substrate entry. Interconversion between the open-gate and close-gate conformations leads to a dynamic regulation of the 20S proteasome proteolysis activity. Functionally, component of the proteasome core, a large protease complex with broad specificity involved in protein degradation. The chain is Proteasome subunit alpha from Salinispora arenicola (strain CNS-205).